The following is a 316-amino-acid chain: ATP synthase gamma chain (316 aa).

This sequence belongs to the ATPase gamma chain family. In terms of assembly, F-type ATPases have 2 components, CF(1) - the catalytic core - and CF(0) - the membrane proton channel. CF(1) has five subunits: alpha(3), beta(3), gamma(1), delta(1), epsilon(1). CF(0) has three main subunits: a, b and c.

Its subcellular location is the cellular thylakoid membrane. Its function is as follows. Produces ATP from ADP in the presence of a proton gradient across the membrane. The gamma chain is believed to be important in regulating ATPase activity and the flow of protons through the CF(0) complex. The polypeptide is ATP synthase gamma chain (Synechococcus sp. (strain CC9605)).